Consider the following 476-residue polypeptide: Probable cytosol aminopeptidase (476 aa).

Residues K242 and D247 each coordinate Mn(2+). K254 is an active-site residue. Residues D265, D324, and E326 each contribute to the Mn(2+) site. Residue R328 is part of the active site.

Belongs to the peptidase M17 family. It depends on Mn(2+) as a cofactor.

It localises to the cytoplasm. It carries out the reaction Release of an N-terminal amino acid, Xaa-|-Yaa-, in which Xaa is preferably Leu, but may be other amino acids including Pro although not Arg or Lys, and Yaa may be Pro. Amino acid amides and methyl esters are also readily hydrolyzed, but rates on arylamides are exceedingly low.. The enzyme catalyses Release of an N-terminal amino acid, preferentially leucine, but not glutamic or aspartic acids.. Functionally, presumably involved in the processing and regular turnover of intracellular proteins. Catalyzes the removal of unsubstituted N-terminal amino acids from various peptides. This chain is Probable cytosol aminopeptidase, found in Treponema denticola (strain ATCC 35405 / DSM 14222 / CIP 103919 / JCM 8153 / KCTC 15104).